A 445-amino-acid polypeptide reads, in one-letter code: MTMFENVTRALARQLNPRGDLTPLDSLIDFKRFHPFCLVLRKRKSTLFWGARYVRTDYTLLDVLEPGSSPSDPTDTGNFGFKNMLDTRVEGDVDVPKTVKVKGTAGLSQNSTLEVQTLSVAPKALETVQERKLAADHPFLKEMQDQGENLYVVMEVVETVQEVTLERAGKAEACFSLPFFAPLGLQGSINHKEAVTIPKGCVLAFRVRQLMVKGKDEWDIPHICNDNMQTFPPGEKSGEEKVILIQASDVGDVHEGFRTLKEEVQRETQQVEKLSRVGQSSLLSSLSKLLGKKKELQDLELALEGALDKGHEVTLEALPKDVLLSKEAVGAILYFVGALTELSEAQQKLLVKSMEKKILPVQLKLVESTMEQNFLLDKEGVFPLQPELLSSLGDEELTLTEALVGLSGLEVQRSGPQYMWDPDTLPRLCALYAGLSLLQQLTKAS.

The segment at 1-251 is triggers pyroptosis; the sequence is MTMFENVTRA…VILIQASDVG (251 aa). Residue 9–13 participates in a cardiolipin binding; the sequence is RALAR. Transmembrane regions (beta stranded) follow at residues 78-95, 99-120, 163-179, and 183-197; these read NFGF…DVDV, VKVK…TLSV, VTLE…SLPF, and LGLQ…AVTI.

The protein belongs to the gasdermin family. In terms of assembly, homooligomer; homooligomeric ring-shaped pore complex containing 18-36 subunits when inserted in the membrane. Cleavage by S.pyogenes SpeB relieves autoinhibition by releasing the N-terminal moiety (Gasdermin-A, N-terminal) that initiates pyroptosis. In terms of processing, palmitoylated. Expressed predominantly in the gastrointestinal tract and, at a lower level, in the skin. Also detected in mammary gland. In the gastrointestinal tract, mainly expressed in differentiated cells, including the differentiated cell layer of esophagus and mucus-secreting pit cells of the gastric epithelium. Down-regulated in gastric cancer cells.

The protein resides in the cytoplasm. The protein localises to the perinuclear region. Its subcellular location is the cytosol. It localises to the cell membrane. The full-length protein before cleavage is inactive: intramolecular interactions between N- and C-terminal domains mediate autoinhibition in the absence of activation signal. The intrinsic pyroptosis-inducing activity is carried by the released N-terminal moiety (Gasdermin-A, N-terminal) following cleavage by S.pyogenes effector protein SpeB. In terms of biological role, this form constitutes the precursor of the pore-forming protein and acts as a sensor of infection: upon infection by S.pyogenes, specifically cleaved by S.pyogenes effector protein SpeB in epithelial cells, releasing the N-terminal moiety (Gasdermin-A, N-terminal) that binds to membranes and forms pores, triggering pyroptosis. Pore-forming protein that causes membrane permeabilization and pyroptosis. Released upon cleavage by S.pyogenes effector protein SpeB, and binds to membrane inner leaflet lipids. Homooligomerizes within the membrane and forms pores of 10-15 nanometers (nm) of inner diameter, triggering pyroptosis. Pyroptosis triggers the elimination of the infected skin cell, depriving the pathogen of its protective niche, while inducing an inflammatory response. This ultimately prevents bacterial penetration of the epithelial barrier and a subsequent systemic dissemination of the pathogen. Binds to cardiolipin and other acidic phospholipids, such as phosphatidylserine, which mediate its targeting to the inner leaflet membrane. The protein is Gasdermin-A of Homo sapiens (Human).